Consider the following 949-residue polypeptide: UvrABC system protein A (949 aa).

42–49 is a binding site for ATP; the sequence is GLSGSGKS. The C4-type zinc-finger motif lies at 262–289; that stretch reads CPVCSYSLPELEPRLFSFNNPMGSCPTC. ABC transporter domains are found at residues 319–596 and 616–945; these read WDKR…ENSV and VNPD…KYLK. 649 to 656 contacts ATP; sequence GVSGSGKS. Residues 748-774 form a C4-type zinc finger; sequence CEACQGDGVIKVEMHFLPDVYVPCEVC.

This sequence belongs to the ABC transporter superfamily. UvrA family. In terms of assembly, forms a heterotetramer with UvrB during the search for lesions.

Its subcellular location is the cytoplasm. The UvrABC repair system catalyzes the recognition and processing of DNA lesions. UvrA is an ATPase and a DNA-binding protein. A damage recognition complex composed of 2 UvrA and 2 UvrB subunits scans DNA for abnormalities. When the presence of a lesion has been verified by UvrB, the UvrA molecules dissociate. The sequence is that of UvrABC system protein A from Neisseria meningitidis serogroup B (strain ATCC BAA-335 / MC58).